Reading from the N-terminus, the 500-residue chain is Perfringolysin O (500 aa).

The signal sequence occupies residues 1-28 (MIRFKKTKLIASIAMALCLFSQPVISFS). The next 4 membrane-spanning stretches (beta stranded) occupy residues 189-202 (KSQI…NAKV), 209-218 (VDFNAVANNE), 287-296 (SKDVQAAFKA), and 304-316 (KNSQ…YENS). Positions 458 to 468 (ECTGLAWEWWR) match the Conserved undecapeptide motif. A Cholesterol binding motif is present at residues 490–491 (TL).

This sequence belongs to the cholesterol-dependent cytolysin family. In terms of assembly, modeling based on cryo-EM shows a homooligomeric pore complex containing 38-44 subunits; when inserted in the host membrane.

It is found in the secreted. It localises to the host cell membrane. Its function is as follows. A cholesterol-dependent toxin that causes cytolysis by forming pores in cholesterol-containing host membranes. After binding to target membranes, the protein assembles into a pre-pore complex. A major conformational change leads to insertion in the host membrane and formation of an oligomeric pore complex. Cholesterol is required for binding to host cell membranes, membrane insertion and pore formation; cholesterol binding is mediated by a Thr-Leu pair in the C-terminus. Can be reversibly inactivated by oxidation. This Clostridium perfringens (strain 13 / Type A) protein is Perfringolysin O (pfo).